The following is a 246-amino-acid chain: NAD(P)H-hydrate epimerase (246 aa).

One can recognise a YjeF N-terminal domain in the interval 12–234 (AAEIDKELMG…DFANKFGFEP (223 aa)). Residue 69–73 (NNGGD) participates in (6S)-NADPHX binding. 2 residues coordinate K(+): N70 and D138. Residues 142–148 (GFSFKPP) and D173 contribute to the (6S)-NADPHX site. Position 176 (T176) interacts with K(+).

It belongs to the NnrE/AIBP family. The cofactor is K(+).

The protein resides in the cytoplasm. The protein localises to the mitochondrion. It carries out the reaction (6R)-NADHX = (6S)-NADHX. The catalysed reaction is (6R)-NADPHX = (6S)-NADPHX. Catalyzes the epimerization of the S- and R-forms of NAD(P)HX, a damaged form of NAD(P)H that is a result of enzymatic or heat-dependent hydration. This is a prerequisite for the S-specific NAD(P)H-hydrate dehydratase to allow the repair of both epimers of NAD(P)HX. In Saccharomyces cerevisiae (strain ATCC 204508 / S288c) (Baker's yeast), this protein is NAD(P)H-hydrate epimerase.